The chain runs to 385 residues: Acetylornithine aminotransferase (385 aa).

Residues 95–96 (GA) and Phe122 contribute to the pyridoxal 5'-phosphate site. A N(2)-acetyl-L-ornithine-binding site is contributed by Arg125. Residue 208-211 (DEIQ) participates in pyridoxal 5'-phosphate binding. Position 237 is an N6-(pyridoxal phosphate)lysine (Lys237). Thr265 contacts N(2)-acetyl-L-ornithine. Residue Thr266 coordinates pyridoxal 5'-phosphate.

It belongs to the class-III pyridoxal-phosphate-dependent aminotransferase family. ArgD subfamily. Homodimer. Requires pyridoxal 5'-phosphate as cofactor.

It is found in the cytoplasm. It carries out the reaction N(2)-acetyl-L-ornithine + 2-oxoglutarate = N-acetyl-L-glutamate 5-semialdehyde + L-glutamate. It participates in amino-acid biosynthesis; L-arginine biosynthesis; N(2)-acetyl-L-ornithine from L-glutamate: step 4/4. This chain is Acetylornithine aminotransferase, found in Bacillus subtilis (strain 168).